We begin with the raw amino-acid sequence, 270 residues long: Bis(5'-nucleosyl)-tetraphosphatase, symmetrical (270 aa).

Belongs to the Ap4A hydrolase family.

The catalysed reaction is P(1),P(4)-bis(5'-adenosyl) tetraphosphate + H2O = 2 ADP + 2 H(+). Its function is as follows. Hydrolyzes diadenosine 5',5'''-P1,P4-tetraphosphate to yield ADP. In Haemophilus ducreyi (strain 35000HP / ATCC 700724), this protein is Bis(5'-nucleosyl)-tetraphosphatase, symmetrical.